Here is a 205-residue protein sequence, read N- to C-terminus: Putative 3-methyladenine DNA glycosylase (205 aa).

This sequence belongs to the DNA glycosylase MPG family.

The sequence is that of Putative 3-methyladenine DNA glycosylase from Bacillus cereus (strain Q1).